The sequence spans 320 residues: Acetyl-coenzyme A carboxylase carboxyl transferase subunit alpha (320 aa).

Positions 41-295 constitute a CoA carboxyltransferase C-terminal domain; sequence RIEEKAGQAL…GEAIAQAFDE (255 aa).

This sequence belongs to the AccA family. In terms of assembly, acetyl-CoA carboxylase is a heterohexamer composed of biotin carboxyl carrier protein (AccB), biotin carboxylase (AccC) and two subunits each of ACCase subunit alpha (AccA) and ACCase subunit beta (AccD).

Its subcellular location is the cytoplasm. It carries out the reaction N(6)-carboxybiotinyl-L-lysyl-[protein] + acetyl-CoA = N(6)-biotinyl-L-lysyl-[protein] + malonyl-CoA. It participates in lipid metabolism; malonyl-CoA biosynthesis; malonyl-CoA from acetyl-CoA: step 1/1. Functionally, component of the acetyl coenzyme A carboxylase (ACC) complex. First, biotin carboxylase catalyzes the carboxylation of biotin on its carrier protein (BCCP) and then the CO(2) group is transferred by the carboxyltransferase to acetyl-CoA to form malonyl-CoA. This Bradyrhizobium sp. (strain BTAi1 / ATCC BAA-1182) protein is Acetyl-coenzyme A carboxylase carboxyl transferase subunit alpha.